Consider the following 114-residue polypeptide: Large ribosomal subunit protein uL18 (114 aa).

Belongs to the universal ribosomal protein uL18 family. Part of the 50S ribosomal subunit; part of the 5S rRNA/L5/L18/L25 subcomplex. Contacts the 23S rRNA. Contacts protein L27 and the 5S rRNA.

Functionally, this is one of the proteins that bind and probably mediate the attachment of the 5S RNA into the large ribosomal subunit, where it forms part of the central protuberance. In Deinococcus radiodurans (strain ATCC 13939 / DSM 20539 / JCM 16871 / CCUG 27074 / LMG 4051 / NBRC 15346 / NCIMB 9279 / VKM B-1422 / R1), this protein is Large ribosomal subunit protein uL18 (rplR).